The sequence spans 298 residues: 3-sulfolactaldehyde reductase (298 aa).

NAD(+) contacts are provided by residues 11 to 12, D31, L65, and T96; that span reads QM. R123 serves as a coordination point for 2,3-dihydroxypropane-1-sulfonate. The active site involves K171. 174 to 178 lines the 2,3-dihydroxypropane-1-sulfonate pocket; sequence NNYMS. NAD(+) is bound at residue K240.

The protein belongs to the HIBADH-related family. 3-sulfolactaldehyde reductase subfamily. In terms of assembly, homotetramer. Dimer of dimers.

It catalyses the reaction (2S)-3-sulfopropanediol + NAD(+) = (2S)-3-sulfolactaldehyde + NADH + H(+). It carries out the reaction 4-hydroxybutanoate + NAD(+) = succinate semialdehyde + NADH + H(+). Inhibited by the NADH analogs tetrahydro-NADH and hexahydro-NADH. In terms of biological role, reduces 3-sulfolactaldehyde (SLA) to 2,3-dihydroxypropane 1-sulfonate (DHPS). Metabolite profiling studies showed that the enzyme also catalyzes in vitro the NADH-dependent reduction of succinic semialdehyde (SSA) to 4-hydroxybutyrate (GHB), and that it could be involved in the metabolism of SSA, and other potentially toxic intermediates that may accumulate under stress conditions. However, the enzyme exhibits a 42,000-fold greater catalytic efficiency for the reduction of SLA over SSA. Shows no detectable activity on the analogous glycolytic intermediate glyceraldehyde-3-phosphate. This Escherichia coli (strain K12) protein is 3-sulfolactaldehyde reductase (yihU).